Reading from the N-terminus, the 505-residue chain is Zinc finger protein 649 (505 aa).

The KRAB domain maps to leucine 8–proline 79. A Glycyl lysine isopeptide (Lys-Gly) (interchain with G-Cter in SUMO2) cross-link involves residue lysine 112. 10 C2H2-type zinc fingers span residues histidine 178–histidine 200, histidine 206–histidine 228, histidine 234–histidine 256, tyrosine 262–histidine 284, histidine 290–histidine 312, histidine 318–histidine 340, tyrosine 346–histidine 368, phenylalanine 374–histidine 396, tyrosine 402–histidine 424, and tyrosine 430–histidine 452. Positions glutamate 455–glycine 481 are disordered. Residues asparagine 465–glutamate 477 are compositionally biased toward polar residues.

Belongs to the krueppel C2H2-type zinc-finger protein family. In terms of tissue distribution, highly expressed in heart, skeletal muscle, and brain. Lower expression in liver, lung, kidney, pancreas and placenta.

It localises to the nucleus. Functionally, transcriptional repressor. Regulator of transcriptional factor complexes and may suppress SRE and AP-1 transcription activities mediated by growth factor signaling pathways. The sequence is that of Zinc finger protein 649 (ZNF649) from Homo sapiens (Human).